A 431-amino-acid chain; its full sequence is Light-independent protochlorophyllide reductase subunit N (431 aa).

[4Fe-4S] cluster-binding residues include cysteine 29, cysteine 54, and cysteine 114.

The protein belongs to the BchN/ChlN family. As to quaternary structure, protochlorophyllide reductase is composed of three subunits; ChlL, ChlN and ChlB. Forms a heterotetramer of two ChlB and two ChlN subunits. [4Fe-4S] cluster serves as cofactor.

Its subcellular location is the plastid. The protein resides in the chloroplast. It carries out the reaction chlorophyllide a + oxidized 2[4Fe-4S]-[ferredoxin] + 2 ADP + 2 phosphate = protochlorophyllide a + reduced 2[4Fe-4S]-[ferredoxin] + 2 ATP + 2 H2O. The protein operates within porphyrin-containing compound metabolism; chlorophyll biosynthesis (light-independent). Functionally, component of the dark-operative protochlorophyllide reductase (DPOR) that uses Mg-ATP and reduced ferredoxin to reduce ring D of protochlorophyllide (Pchlide) to form chlorophyllide a (Chlide). This reaction is light-independent. The NB-protein (ChlN-ChlB) is the catalytic component of the complex. This Nephroselmis olivacea (Green alga) protein is Light-independent protochlorophyllide reductase subunit N.